A 344-amino-acid polypeptide reads, in one-letter code: Anthranilate phosphoribosyltransferase (344 aa).

5-phospho-alpha-D-ribose 1-diphosphate is bound by residues Gly-84, 87–88 (GD), Thr-92, 94–97 (NIST), 112–120 (KHGGRSVSS), and Ser-124. An anthranilate-binding site is contributed by Gly-84. Ser-96 contacts Mg(2+). Arg-170 serves as a coordination point for anthranilate. 2 residues coordinate Mg(2+): Asp-229 and Glu-230.

This sequence belongs to the anthranilate phosphoribosyltransferase family. In terms of assembly, homodimer. Requires Mg(2+) as cofactor.

It catalyses the reaction N-(5-phospho-beta-D-ribosyl)anthranilate + diphosphate = 5-phospho-alpha-D-ribose 1-diphosphate + anthranilate. It participates in amino-acid biosynthesis; L-tryptophan biosynthesis; L-tryptophan from chorismate: step 2/5. In terms of biological role, catalyzes the transfer of the phosphoribosyl group of 5-phosphorylribose-1-pyrophosphate (PRPP) to anthranilate to yield N-(5'-phosphoribosyl)-anthranilate (PRA). The chain is Anthranilate phosphoribosyltransferase from Janthinobacterium sp. (strain Marseille) (Minibacterium massiliensis).